A 294-amino-acid polypeptide reads, in one-letter code: Cell division protein ZipA (294 aa).

Residue Met1 is a topological domain, periplasmic. A helical membrane pass occupies residues Glu2 to Phe22. The Cytoplasmic portion of the chain corresponds to Asp23–Arg294. The tract at residues Pro47 to Gln107 is disordered. Residues Ala82–Pro91 are compositionally biased toward basic and acidic residues.

It belongs to the ZipA family. In terms of assembly, interacts with FtsZ via their C-terminal domains.

The protein localises to the cell inner membrane. Its function is as follows. Essential cell division protein that stabilizes the FtsZ protofilaments by cross-linking them and that serves as a cytoplasmic membrane anchor for the Z ring. Also required for the recruitment to the septal ring of downstream cell division proteins. This Pseudomonas putida (strain W619) protein is Cell division protein ZipA.